We begin with the raw amino-acid sequence, 713 residues long: Polyribonucleotide nucleotidyltransferase (713 aa).

Aspartate 493 and aspartate 499 together coordinate Mg(2+). One can recognise a KH domain in the interval 560–619; the sequence is PRMITIKINPEKIRDVIGKGGSVIRALTEETGTTIDISDDGVVTIASTNSEGMAEAKKRI. The 69-residue stretch at 629 to 697 folds into the S1 motif domain; the sequence is GHVYEGTVLK…EKGRVRLSAK (69 aa).

The protein belongs to the polyribonucleotide nucleotidyltransferase family. The cofactor is Mg(2+).

It is found in the cytoplasm. The enzyme catalyses RNA(n+1) + phosphate = RNA(n) + a ribonucleoside 5'-diphosphate. Involved in mRNA degradation. Catalyzes the phosphorolysis of single-stranded polyribonucleotides processively in the 3'- to 5'-direction. In Burkholderia mallei (strain NCTC 10247), this protein is Polyribonucleotide nucleotidyltransferase.